We begin with the raw amino-acid sequence, 85 residues long: Small ribosomal subunit protein bS16 (85 aa).

The protein belongs to the bacterial ribosomal protein bS16 family.

This chain is Small ribosomal subunit protein bS16, found in Rubrobacter xylanophilus (strain DSM 9941 / JCM 11954 / NBRC 16129 / PRD-1).